The sequence spans 291 residues: MKLRRSMLFVPGSNAAMLSNSFIYKPDSIMFDLEDAVALKEKDSARLLVAHALQHPLYKEIETVVRVNPLDSEFGLLDLNSVVRAGVDVVRMPKTESAQDVLDMDHAITEIEKACGREAGSTKMLAAIESPLGITQANQIAFASKRLIGIALGAEDYVRNLKTERSPEGIELLFARCSILQAARAAGIQAFDTVYSNANNEEGFLKEAALIKQLGFDGKSLINPRQIELLHNLFAPTQKDVEQAKRIIEAAVEAERQGAGVVSLNGKMIDAPIIDRAKLVLERAKSGIREE.

Substrate-binding residues include Arg-66 and Glu-129. Glu-129 and Asp-156 together coordinate Mg(2+).

The protein belongs to the HpcH/HpaI aldolase family. Citrate lyase beta subunit subfamily. In terms of assembly, oligomer with a subunit composition of (alpha,beta,gamma)6. Requires Mg(2+) as cofactor.

It is found in the cytoplasm. The catalysed reaction is citrate = oxaloacetate + acetate. It catalyses the reaction (3S)-citryl-CoA = oxaloacetate + acetyl-CoA. Represents a citryl-ACP lyase. This is Citrate lyase subunit beta (citE) from Haemophilus influenzae (strain ATCC 51907 / DSM 11121 / KW20 / Rd).